The sequence spans 431 residues: Serine hydroxymethyltransferase (431 aa).

Residues Leu-121 and 125 to 127 (GHL) each bind (6S)-5,6,7,8-tetrahydrofolate. Lys-230 is modified (N6-(pyridoxal phosphate)lysine). (6S)-5,6,7,8-tetrahydrofolate is bound at residue 369 to 371 (SPF).

The protein belongs to the SHMT family. As to quaternary structure, homodimer. Pyridoxal 5'-phosphate is required as a cofactor.

The protein localises to the cytoplasm. It catalyses the reaction (6R)-5,10-methylene-5,6,7,8-tetrahydrofolate + glycine + H2O = (6S)-5,6,7,8-tetrahydrofolate + L-serine. Its pathway is one-carbon metabolism; tetrahydrofolate interconversion. It functions in the pathway amino-acid biosynthesis; glycine biosynthesis; glycine from L-serine: step 1/1. Catalyzes the reversible interconversion of serine and glycine with tetrahydrofolate (THF) serving as the one-carbon carrier. This reaction serves as the major source of one-carbon groups required for the biosynthesis of purines, thymidylate, methionine, and other important biomolecules. Also exhibits THF-independent aldolase activity toward beta-hydroxyamino acids, producing glycine and aldehydes, via a retro-aldol mechanism. In Cytophaga hutchinsonii (strain ATCC 33406 / DSM 1761 / CIP 103989 / NBRC 15051 / NCIMB 9469 / D465), this protein is Serine hydroxymethyltransferase.